Consider the following 299-residue polypeptide: MEHFDASLSTYFKAWLGPRDTRVKGWFLLDNYIPTFICSVIYLLIVWLGPKYMRNKQPFSCRGILVVYNLGLTLLSLYMFCELVTGVWEGKYNFFCQGTRTAGESDMKIIRVLWWYYFSKLIEFMDTFFFILRKNNHQITVLHVYHHASMLNIWWFVMNWVPCGHSYFGATLNSFIHVLMYSYYGLSSVLSMRPYLWWKKYITQGQLLQSVLTIIQTSCGVIWPCTFPLGWLYFQIGYMISLIALFTNFYIQSYNKKGASRRKDHLKDHQNGSKAAVNGHTNSFSPLENNVKPRKLRKD.

Met-1 carries the post-translational modification N-acetylmethionine. 7 helical membrane passes run 26–46, 64–84, 112–132, 150–170, 172–192, 205–225, and 226–246; these read WFLL…LLIV, ILVV…CELV, VLWW…FFIL, MLNI…YFGA, LNSF…VLSM, GQLL…IWPC, and TFPL…IALF. The disordered stretch occupies residues 262 to 299; it reads RKDHLKDHQNGSKAAVNGHTNSFSPLENNVKPRKLRKD. A compositionally biased stretch (polar residues) spans 279–288; the sequence is GHTNSFSPLE. Phosphoserine is present on Ser-285.

This sequence belongs to the ELO family. ELOVL5 subfamily. Interacts with TECR.

It localises to the endoplasmic reticulum membrane. It is found in the cell projection. The protein resides in the dendrite. It carries out the reaction a very-long-chain acyl-CoA + malonyl-CoA + H(+) = a very-long-chain 3-oxoacyl-CoA + CO2 + CoA. It catalyses the reaction (6Z,9Z,12Z)-octadecatrienoyl-CoA + malonyl-CoA + H(+) = (8Z,11Z,14Z)-3-oxoeicosatrienoyl-CoA + CO2 + CoA. The enzyme catalyses (9Z,12Z,15Z)-octadecatrienoyl-CoA + malonyl-CoA + H(+) = (11Z,14Z,17Z)-3-oxoeicosatrienoyl-CoA + CO2 + CoA. The catalysed reaction is (9Z)-hexadecenoyl-CoA + malonyl-CoA + H(+) = 3-oxo-(11Z)-octadecenoyl-CoA + CO2 + CoA. It carries out the reaction (9Z)-octadecenoyl-CoA + malonyl-CoA + H(+) = 3-oxo-(11Z)-eicosenoyl-CoA + CO2 + CoA. It catalyses the reaction (11Z)-octadecenoyl-CoA + malonyl-CoA + H(+) = 3-oxo-(13Z)-eicosenoyl-CoA + CO2 + CoA. The enzyme catalyses (9Z,12Z)-octadecadienoyl-CoA + malonyl-CoA + H(+) = (11Z,14Z)-3-oxoicosa-11,14-dienoyl-CoA + CO2 + CoA. The catalysed reaction is (6Z,9Z,12Z,15Z)-octadecatetraenoyl-CoA + malonyl-CoA + H(+) = (8Z,11Z,14Z,17Z)-3-oxoicosatetraenoyl-CoA + CO2 + CoA. It carries out the reaction (5Z,8Z,11Z,14Z)-eicosatetraenoyl-CoA + malonyl-CoA + H(+) = (7Z,10Z,13Z,16Z)-3-oxodocosatetraenoyl-CoA + CO2 + CoA. It catalyses the reaction (5Z,8Z,11Z,14Z,17Z)-eicosapentaenoyl-CoA + malonyl-CoA + H(+) = 3-oxo-(7Z,10Z,13Z,16Z,19Z)-docosapentaenoyl-CoA + CO2 + CoA. It functions in the pathway lipid metabolism; polyunsaturated fatty acid biosynthesis. Its function is as follows. Catalyzes the first and rate-limiting reaction of the four reactions that constitute the long-chain fatty acids elongation cycle. This endoplasmic reticulum-bound enzymatic process allows the addition of 2 carbons to the chain of long- and very long-chain fatty acids (VLCFAs) per cycle. Condensing enzyme that acts specifically toward polyunsaturated acyl-CoA with the higher activity toward C18:3(n-6) acyl-CoA. May participate in the production of monounsaturated and of polyunsaturated VLCFAs of different chain lengths that are involved in multiple biological processes as precursors of membrane lipids and lipid mediators. In conditions where the essential linoleic and alpha linoleic fatty acids are lacking it is also involved in the synthesis of Mead acid from oleic acid. This is Very long chain fatty acid elongase 5 from Pongo abelii (Sumatran orangutan).